We begin with the raw amino-acid sequence, 742 residues long: Ion-translocating oxidoreductase complex subunit C (742 aa).

2 4Fe-4S ferredoxin-type domains span residues 369 to 397 and 407 to 436; these read GEPQ…QQLY and KATT…VQYF. C377, C380, C383, C387, C416, C419, C422, and C426 together coordinate [4Fe-4S] cluster. The disordered stretch occupies residues 602–719; sequence KLEQQQANAE…PEEQVDPRKA (118 aa).

Belongs to the 4Fe4S bacterial-type ferredoxin family. RnfC subfamily. As to quaternary structure, the complex is composed of six subunits: RsxA, RsxB, RsxC, RsxD, RsxE and RsxG. [4Fe-4S] cluster is required as a cofactor.

The protein resides in the cell inner membrane. Functionally, part of a membrane-bound complex that couples electron transfer with translocation of ions across the membrane. Required to maintain the reduced state of SoxR. This Escherichia coli O6:H1 (strain CFT073 / ATCC 700928 / UPEC) protein is Ion-translocating oxidoreductase complex subunit C.